We begin with the raw amino-acid sequence, 960 residues long: Vacuolar membrane protease (960 aa).

The Cytoplasmic segment spans residues methionine 1–lysine 57. Residues glutamate 22–arginine 41 form a disordered region. Low complexity predominate over residues glycine 24–lysine 33. The chain crosses the membrane as a helical span at residues threonine 58–aspartate 78. Topologically, residues asparagine 79–lysine 401 are vacuolar. Residue asparagine 148 is glycosylated (N-linked (GlcNAc...) asparagine). The Zn(2+) site is built by histidine 189 and aspartate 201. Glutamate 235 functions as the Proton acceptor in the catalytic mechanism. Zn(2+) is bound by residues glutamate 236, glutamate 261, and histidine 333. A helical transmembrane segment spans residues isoleucine 402–isoleucine 422. The Cytoplasmic portion of the chain corresponds to arginine 423–serine 432. Residues serine 433–valine 453 form a helical membrane-spanning segment. Residues glutamate 454–threonine 476 are Vacuolar-facing. The helical transmembrane segment at serine 477 to alanine 497 threads the bilayer. Topologically, residues glutamate 498–arginine 502 are cytoplasmic. The chain crosses the membrane as a helical span at residues leucine 503 to glycine 523. At leucine 524–glutamate 535 the chain is on the vacuolar side. A helical membrane pass occupies residues phenylalanine 536–tryptophan 556. Topologically, residues serine 557–leucine 635 are cytoplasmic. A compositionally biased stretch (basic and acidic residues) spans asparagine 587–alanine 605. The disordered stretch occupies residues asparagine 587–arginine 614. The helical transmembrane segment at isoleucine 636 to valine 656 threads the bilayer. N-linked (GlcNAc...) asparagine glycosylation is present at asparagine 657. At asparagine 657–threonine 668 the chain is on the vacuolar side. The chain crosses the membrane as a helical span at residues phenylalanine 669 to alanine 689. Residues glycine 690 to methionine 696 are Cytoplasmic-facing. A helical transmembrane segment spans residues valine 697–phenylalanine 717. The Vacuolar segment spans residues asparagine 718 to valine 960. Residues asparagine 736, asparagine 763, asparagine 803, asparagine 875, and asparagine 921 are each glycosylated (N-linked (GlcNAc...) asparagine).

This sequence belongs to the peptidase M28 family. Zn(2+) is required as a cofactor.

It is found in the vacuole membrane. In terms of biological role, may be involved in vacuolar sorting and osmoregulation. The sequence is that of Vacuolar membrane protease from Lodderomyces elongisporus (strain ATCC 11503 / CBS 2605 / JCM 1781 / NBRC 1676 / NRRL YB-4239) (Yeast).